The chain runs to 180 residues: Large ribosomal subunit protein uL5 (180 aa).

It belongs to the universal ribosomal protein uL5 family. Part of the 50S ribosomal subunit; part of the 5S rRNA/L5/L18/L25 subcomplex. Contacts the 5S rRNA and the P site tRNA. Forms a bridge to the 30S subunit in the 70S ribosome.

Its function is as follows. This is one of the proteins that bind and probably mediate the attachment of the 5S RNA into the large ribosomal subunit, where it forms part of the central protuberance. In the 70S ribosome it contacts protein S13 of the 30S subunit (bridge B1b), connecting the 2 subunits; this bridge is implicated in subunit movement. Contacts the P site tRNA; the 5S rRNA and some of its associated proteins might help stabilize positioning of ribosome-bound tRNAs. This chain is Large ribosomal subunit protein uL5, found in Gloeothece citriformis (strain PCC 7424) (Cyanothece sp. (strain PCC 7424)).